Here is a 472-residue protein sequence, read N- to C-terminus: Ribulose bisphosphate carboxylase large chain 1 (472 aa).

Residues N115 and T165 each coordinate substrate. K167 serves as the catalytic Proton acceptor. Position 169 (K169) interacts with substrate. The Mg(2+) site is built by K193, D195, and E196. K193 bears the N6-carboxylysine mark. H286 (proton acceptor) is an active-site residue. Substrate is bound by residues R287, H319, and S371.

Belongs to the RuBisCO large chain family. Type I subfamily. As to quaternary structure, heterohexadecamer of 8 large chains and 8 small chains. It depends on Mg(2+) as a cofactor.

It carries out the reaction 2 (2R)-3-phosphoglycerate + 2 H(+) = D-ribulose 1,5-bisphosphate + CO2 + H2O. The enzyme catalyses D-ribulose 1,5-bisphosphate + O2 = 2-phosphoglycolate + (2R)-3-phosphoglycerate + 2 H(+). Its function is as follows. RuBisCO catalyzes two reactions: the carboxylation of D-ribulose 1,5-bisphosphate, the primary event in carbon dioxide fixation, as well as the oxidative fragmentation of the pentose substrate. Both reactions occur simultaneously and in competition at the same active site. The protein is Ribulose bisphosphate carboxylase large chain 1 of Rhodopseudomonas palustris (strain BisB5).